The chain runs to 568 residues: Zinc finger protein 648 (568 aa).

A compositionally biased stretch (basic and acidic residues) spans 1 to 11 (MAQVDSQDRWG). Residues 1–106 (MAQVDSQDRW…MSGKASWSRD (106 aa)) are disordered. 10 consecutive C2H2-type zinc fingers follow at residues 279 to 301 (YACE…RRLH), 307 to 329 (YQCS…IRTH), 335 to 358 (YPCP…RNMH), 364 to 386 (FPCS…QRTH), 392 to 414 (FRCP…QRVH), 420 to 442 (FPCP…QTLH), 448 to 470 (FKCA…QRIH), 476 to 498 (FPCT…QQIH), 504 to 526 (FLCA…IRMH), and 532 to 554 (YQCE…RAKH). A disordered region spans residues 548 to 568 (QRHRAKHGTCKKEPIPSSSDE).

It belongs to the krueppel C2H2-type zinc-finger protein family.

It localises to the nucleus. May be involved in transcriptional regulation. This is Zinc finger protein 648 (ZNF648) from Homo sapiens (Human).